A 37-amino-acid chain; its full sequence is Cytochrome b6-f complex subunit 5 (37 aa).

A helical transmembrane segment spans residues Leu-5–Ala-25.

It belongs to the PetG family. The 4 large subunits of the cytochrome b6-f complex are cytochrome b6, subunit IV (17 kDa polypeptide, PetD), cytochrome f and the Rieske protein, while the 4 small subunits are PetG, PetL, PetM and PetN. The complex functions as a dimer.

The protein resides in the plastid. It localises to the chloroplast thylakoid membrane. Component of the cytochrome b6-f complex, which mediates electron transfer between photosystem II (PSII) and photosystem I (PSI), cyclic electron flow around PSI, and state transitions. PetG is required for either the stability or assembly of the cytochrome b6-f complex. This chain is Cytochrome b6-f complex subunit 5, found in Marchantia polymorpha (Common liverwort).